A 243-amino-acid polypeptide reads, in one-letter code: Proteasome subunit beta (243 aa).

The segment at 1-40 (MRTPMNNDISGRPDSLNGDRSDVFSPELGEFPNADDRAND) is disordered. A propeptide spans 1 to 49 (MRTPMNNDISGRPDSLNGDRSDVFSPELGEFPNADDRANDIGDMETKTG) (removed in mature form; by autocatalysis). The active-site Nucleophile is threonine 50.

It belongs to the peptidase T1B family. The 20S proteasome core is composed of 14 alpha and 14 beta subunits that assemble into four stacked heptameric rings, resulting in a barrel-shaped structure. The two inner rings, each composed of seven catalytic beta subunits, are sandwiched by two outer rings, each composed of seven alpha subunits. The catalytic chamber with the active sites is on the inside of the barrel. Has a gated structure, the ends of the cylinder being occluded by the N-termini of the alpha-subunits. Is capped at one or both ends by the proteasome regulatory ATPase, PAN.

It is found in the cytoplasm. It carries out the reaction Cleavage of peptide bonds with very broad specificity.. Its activity is regulated as follows. The formation of the proteasomal ATPase PAN-20S proteasome complex, via the docking of the C-termini of PAN into the intersubunit pockets in the alpha-rings, triggers opening of the gate for substrate entry. Interconversion between the open-gate and close-gate conformations leads to a dynamic regulation of the 20S proteasome proteolysis activity. Its function is as follows. Component of the proteasome core, a large protease complex with broad specificity involved in protein degradation. This chain is Proteasome subunit beta, found in Haloquadratum walsbyi (strain DSM 16790 / HBSQ001).